Reading from the N-terminus, the 1420-residue chain is DNA-directed RNA polymerase subunit beta'' (1420 aa).

Cysteine 220, cysteine 295, cysteine 302, and cysteine 305 together coordinate Zn(2+).

It belongs to the RNA polymerase beta' chain family. RpoC2 subfamily. In terms of assembly, in plastids the minimal PEP RNA polymerase catalytic core is composed of four subunits: alpha, beta, beta', and beta''. When a (nuclear-encoded) sigma factor is associated with the core the holoenzyme is formed, which can initiate transcription. Requires Zn(2+) as cofactor.

It localises to the plastid. The protein localises to the chloroplast. It catalyses the reaction RNA(n) + a ribonucleoside 5'-triphosphate = RNA(n+1) + diphosphate. DNA-dependent RNA polymerase catalyzes the transcription of DNA into RNA using the four ribonucleoside triphosphates as substrates. This chain is DNA-directed RNA polymerase subunit beta'', found in Adiantum capillus-veneris (Maidenhair fern).